Consider the following 317-residue polypeptide: (R)-citramalyl-CoA lyase (317 aa).

Positions 4-281 constitute a Pyruvate carboxyltransferase domain; that stretch reads VTIVDVAPRD…PTGIDLSALI (278 aa). Arg12 contributes to the substrate binding site. Residues Asp13, His214, and His216 each contribute to the a divalent metal cation site. Cys247 is an active-site residue. An a divalent metal cation-binding site is contributed by Asn256.

The protein belongs to the HMG-CoA lyase family. In terms of assembly, homodimer. Mn(2+) serves as cofactor. Requires Co(2+) as cofactor. It depends on Ni(2+) as a cofactor. Mg(2+) is required as a cofactor.

The catalysed reaction is (3R)-citramalyl-CoA = pyruvate + acetyl-CoA. Activated by dithioerythritol (DTE) (in vitro). Involved in the glyoxylate assimilation cycle used to regenerate acetyl-CoA and produce pyruvate as universal precursor for biosynthesis. Catalyzes the cleavage of (R)-citramalyl-CoA to yield acetyl-CoA and pyruvate. The sequence is that of (R)-citramalyl-CoA lyase (ccl) from Chloroflexus aurantiacus (strain ATCC 29366 / DSM 635 / J-10-fl).